The sequence spans 403 residues: Dynactin subunit 2-B (403 aa).

The segment at 1 to 26 (MADPKYADLPGIARNEPDLYETSDLP) is disordered. Residues 99-132 (PQQKYQRLLHEVQELTQEVEKTQSTLKESATEEK) are a coiled coil. The interval 183–206 (AAKTRKDPEGKSSAKGPGPDNENL) is disordered. Residues 184 to 194 (AKTRKDPEGKS) are compositionally biased toward basic and acidic residues. The stretch at 381-401 (KENLATVEDNFSSIDGRIKKL) forms a coiled coil.

It belongs to the dynactin subunit 2 family. Subunit of dynactin, a multiprotein complex part of a tripartite complex with dynein and a adapter, such as BICDL1, BICD2 or HOOK3. The dynactin complex is built around ACTR1A/ACTB filament and consists of an actin-related filament composed of a shoulder domain, a pointed end and a barbed end. Its length is defined by its flexible shoulder domain. The soulder is composed of 2 DCTN1 subunits, 4 DCTN2 and 2 DCTN3.

Its subcellular location is the cytoplasm. The protein localises to the cytoskeleton. The protein resides in the microtubule organizing center. It is found in the centrosome. It localises to the membrane. In terms of biological role, part of the dynactin complex that activates the molecular motor dynein for ultra-processive transport along microtubules. In the dynactin soulder domain, binds the ACTR1A filament and acts as a molecular ruler to determine the length. Modulates cytoplasmic dynein binding to an organelle, and plays a role in prometaphase chromosome alignment and spindle organization during mitosis. Involved in anchoring microtubules to centrosomes. This is Dynactin subunit 2-B (dctn2-b) from Xenopus laevis (African clawed frog).